The sequence spans 485 residues: Phenylalanine--tRNA ligase alpha subunit, cytoplasmic (485 aa).

Residues T318, Q360–E362, and Y400 contribute to the L-phenylalanine site. E402 provides a ligand contact to Mg(2+). F426 contacts L-phenylalanine.

It belongs to the class-II aminoacyl-tRNA synthetase family. Phe-tRNA synthetase alpha subunit type 2 subfamily. Tetramer of two alpha and two beta subunits. Mg(2+) serves as cofactor.

The protein resides in the cytoplasm. The protein localises to the cytosol. The enzyme catalyses tRNA(Phe) + L-phenylalanine + ATP = L-phenylalanyl-tRNA(Phe) + AMP + diphosphate + H(+). The protein is Phenylalanine--tRNA ligase alpha subunit, cytoplasmic of Arabidopsis thaliana (Mouse-ear cress).